Reading from the N-terminus, the 520-residue chain is Keratin, type II cytoskeletal 72 (520 aa).

Positions 1 to 133 are head; that stretch reads MSRQLTLYPG…DPEIQKVRAQ (133 aa). Residues 134 to 169 form a coil 1A region; the sequence is EREQIKALNNKFASFIDKVRFLEQQNQVLETKWELL. The IF rod domain occupies 134–447; that stretch reads EREQIKALNN…KLLESEESRM (314 aa). The interval 170-188 is linker 1; it reads QQLDQNNSRRSLEPVHESY. The tract at residues 189–280 is coil 1B; the sequence is ISNLQKQLEI…VLFEGEIAQM (92 aa). The interval 281–304 is linker 12; sequence QSHISDTSVILSMDNNRQLDLDSI. Positions 305 to 443 are coil 2; sequence LAEVRAQYEE…ATYRKLLESE (139 aa). The segment at 444-520 is tail; it reads ESRMAGEYPS…SSCVSKKASR (77 aa). Residues 495 to 520 are disordered; the sequence is GSCGSELKDPPAKTSASSCVSKKASR.

It belongs to the intermediate filament family. In terms of assembly, heterotetramer of two type I and two type II keratins.

In terms of biological role, has a role in hair formation. Specific component of keratin intermediate filaments in the inner root sheath (IRS) of the hair follicle. This chain is Keratin, type II cytoskeletal 72 (Krt72), found in Rattus norvegicus (Rat).